The primary structure comprises 316 residues: GTP cyclohydrolase FolE2 1 (316 aa).

Belongs to the GTP cyclohydrolase IV family.

It carries out the reaction GTP + H2O = 7,8-dihydroneopterin 3'-triphosphate + formate + H(+). It functions in the pathway cofactor biosynthesis; 7,8-dihydroneopterin triphosphate biosynthesis; 7,8-dihydroneopterin triphosphate from GTP: step 1/1. Its function is as follows. Converts GTP to 7,8-dihydroneopterin triphosphate. This is GTP cyclohydrolase FolE2 1 from Burkholderia orbicola (strain AU 1054).